The sequence spans 605 residues: UvrABC system protein C (605 aa).

The GIY-YIG domain occupies 14–92 (QSCGVYKMVG…IKSLKPLYNI (79 aa)). One can recognise a UVR domain in the interval 202–237 (KEVKEQLLFTMRKCSSEENYELAAIYRDRVKFLEQI).

Belongs to the UvrC family. Interacts with UvrB in an incision complex.

Its subcellular location is the cytoplasm. Functionally, the UvrABC repair system catalyzes the recognition and processing of DNA lesions. UvrC both incises the 5' and 3' sides of the lesion. The N-terminal half is responsible for the 3' incision and the C-terminal half is responsible for the 5' incision. This chain is UvrABC system protein C, found in Wolbachia pipientis wMel.